The sequence spans 549 residues: Chaperonin GroEL (549 aa).

ATP is bound by residues 29 to 32, Lys50, 86 to 90, Gly418, and Asp499; these read TAGP and DGTTT.

Belongs to the chaperonin (HSP60) family. As to quaternary structure, forms a cylinder of 14 subunits composed of two heptameric rings stacked back-to-back. Interacts with the co-chaperonin GroES.

The protein resides in the cytoplasm. The catalysed reaction is ATP + H2O + a folded polypeptide = ADP + phosphate + an unfolded polypeptide.. Functionally, together with its co-chaperonin GroES, plays an essential role in assisting protein folding. The GroEL-GroES system forms a nano-cage that allows encapsulation of the non-native substrate proteins and provides a physical environment optimized to promote and accelerate protein folding. This chain is Chaperonin GroEL, found in Wolbachia sp. subsp. Drosophila simulans (strain wRi).